The primary structure comprises 689 residues: Glycine--tRNA ligase beta subunit (689 aa).

The protein belongs to the class-II aminoacyl-tRNA synthetase family. Tetramer of two alpha and two beta subunits.

The protein resides in the cytoplasm. The enzyme catalyses tRNA(Gly) + glycine + ATP = glycyl-tRNA(Gly) + AMP + diphosphate. The sequence is that of Glycine--tRNA ligase beta subunit from Shewanella baltica (strain OS195).